Here is a 110-residue protein sequence, read N- to C-terminus: U1-lycotoxin-Ls1hh (110 aa).

The N-terminal stretch at 1–20 (MKFVLLFGVLLVTLFSYSSA) is a signal peptide. A propeptide spanning residues 21-44 (EMLDDFDQADEDELLSLIEKEEAR) is cleaved from the precursor. 4 cysteine pairs are disulfide-bonded: Cys47-Cys62, Cys54-Cys71, Cys61-Cys89, and Cys73-Cys87.

Belongs to the neurotoxin 19 (CSTX) family. 03 subfamily. As to expression, expressed by the venom gland.

The protein resides in the secreted. The protein is U1-lycotoxin-Ls1hh of Lycosa singoriensis (Wolf spider).